We begin with the raw amino-acid sequence, 347 residues long: Fc receptor-like A (347 aa).

Positions 1 to 27 (MKLSCMLIEWALYVCPAVLLATQMSLA) are cleaved as a signal peptide. Ig-like C2-type domains are found at residues 77–166 (PFHL…ETAS) and 179–257 (PVLK…RQIS). Disulfide bonds link Cys106–Cys150 and Cys199–Cys247. Residues 272 to 296 (KPATPETPPPAKAPGPLPLLPTPSD) form a disordered region. Pro residues predominate over residues 276–292 (PETPPPAKAPGPLPLLP).

As to quaternary structure, monomer or homodimer; disulfide-linked.

The protein resides in the cytoplasm. Functionally, may be implicated in B-cell differentiation and lymphomagenesis. The polypeptide is Fc receptor-like A (Fcrla) (Rattus norvegicus (Rat)).